Here is a 586-residue protein sequence, read N- to C-terminus: uncharacterized protein (586 aa).

The 284-residue stretch at Tyr-29–Ser-312 folds into the ABC transmembrane type-1 domain. 4 helical membrane-spanning segments follow: residues Gly-30 to Met-50, Val-66 to Val-86, Met-162 to Val-184, and Ile-256 to Val-276. The ABC transporter domain maps to Ile-346–Leu-580. An ATP-binding site is contributed by Gly-379–Ser-386.

This sequence belongs to the ABC transporter superfamily.

The protein localises to the cell membrane. This is an uncharacterized protein from Sinorhizobium fredii (strain NBRC 101917 / NGR234).